The sequence spans 352 residues: Trifunctional sesterterpene/triterpene/sesquarterpene synthase (352 aa).

Belongs to the large terpene synthase family.

The enzyme catalyses (2E,6E,10E,14E)-geranylfarnesyl diphosphate = beta-geranylfarnesene + diphosphate. It catalyses the reaction all-trans-hexaprenyl diphosphate = beta-hexaprene + diphosphate. It carries out the reaction all-trans-heptaprenyl diphosphate = beta-heptaprene + diphosphate. Its function is as follows. Catalyzes the conversion of geranylfarnesyl diphosphate (GFPP) and hexaprenyl diphosphate (HexPP) into beta-geranylfarnesene and beta-hexaprene, respectively. Also produces beta-heptaprene from heptaprenyl diphosphate (HepPP) as a minor product. The sequence is that of Trifunctional sesterterpene/triterpene/sesquarterpene synthase from Shouchella clausii (Alkalihalobacillus clausii).